A 380-amino-acid polypeptide reads, in one-letter code: Beta sliding clamp (380 aa).

This sequence belongs to the beta sliding clamp family. In terms of assembly, forms a ring-shaped head-to-tail homodimer around DNA which binds and tethers DNA polymerases and other proteins to the DNA. The DNA replisome complex has a single clamp-loading complex (3 tau and 1 each of delta, delta', psi and chi subunits) which binds 3 Pol III cores (1 core on the leading strand and 2 on the lagging strand) each with a beta sliding clamp dimer. Additional proteins in the replisome are other copies of gamma, psi and chi, Ssb, DNA helicase and RNA primase.

The protein resides in the cytoplasm. In terms of biological role, confers DNA tethering and processivity to DNA polymerases and other proteins. Acts as a clamp, forming a ring around DNA (a reaction catalyzed by the clamp-loading complex) which diffuses in an ATP-independent manner freely and bidirectionally along dsDNA. Initially characterized for its ability to contact the catalytic subunit of DNA polymerase III (Pol III), a complex, multichain enzyme responsible for most of the replicative synthesis in bacteria; Pol III exhibits 3'-5' exonuclease proofreading activity. The beta chain is required for initiation of replication as well as for processivity of DNA replication. The polypeptide is Beta sliding clamp (dnaN) (Mycoplasma genitalium (strain ATCC 33530 / DSM 19775 / NCTC 10195 / G37) (Mycoplasmoides genitalium)).